A 251-amino-acid polypeptide reads, in one-letter code: Flap endonuclease Xni (251 aa).

Asp-104 contributes to the Mg(2+) binding site. Residues 160-249 (VLPRQLPDYW…IDGNLQQLRL (90 aa)) enclose the 5'-3' exonuclease domain. Leu-171, Ala-172, Pro-180, Val-182, and Ile-185 together coordinate K(+). The interaction with DNA stretch occupies residues 184–189 (GIGPKS).

Belongs to the Xni family. Mg(2+) serves as cofactor. The cofactor is K(+).

Functionally, has flap endonuclease activity. During DNA replication, flap endonucleases cleave the 5'-overhanging flap structure that is generated by displacement synthesis when DNA polymerase encounters the 5'-end of a downstream Okazaki fragment. The protein is Flap endonuclease Xni of Salmonella heidelberg (strain SL476).